A 72-amino-acid polypeptide reads, in one-letter code: Translation initiation factor IF-1 (72 aa).

Residues 1–72 (MSKEEVLEFS…TKGRITYRYK (72 aa)) form the S1-like domain.

Belongs to the IF-1 family. Component of the 30S ribosomal translation pre-initiation complex which assembles on the 30S ribosome in the order IF-2 and IF-3, IF-1 and N-formylmethionyl-tRNA(fMet); mRNA recruitment can occur at any time during PIC assembly.

The protein localises to the cytoplasm. One of the essential components for the initiation of protein synthesis. Stabilizes the binding of IF-2 and IF-3 on the 30S subunit to which N-formylmethionyl-tRNA(fMet) subsequently binds. Helps modulate mRNA selection, yielding the 30S pre-initiation complex (PIC). Upon addition of the 50S ribosomal subunit IF-1, IF-2 and IF-3 are released leaving the mature 70S translation initiation complex. The protein is Translation initiation factor IF-1 of Bartonella bacilliformis (strain ATCC 35685 / KC583 / Herrer 020/F12,63).